Consider the following 240-residue polypeptide: MSDIKDGNNDHLVESDDPEHPANLIPALCRNFYSHGWVTGTGGGASIKRDNHIFIAPSGVQKELIQPHNIFVLSYPTPKYPPSARQYIRKPLKLNPSACTPLFLAAFERGAGCCIHTHSQWAVLVTLLVEREKGPEGCFEISNIEQIKGIPRGKGKGMMGFYDTLKIPIIENTAFEEDLTQSLEEAMEMYPDTYAVLVRRHGIYVWGDDVAKAKTQCESLDYLFQLAVEMHRLGLPWVKS.

C99 contacts substrate. The Zn(2+) site is built by H116 and H118. E145 serves as the catalytic Proton donor/acceptor. H201 contributes to the Zn(2+) binding site.

It belongs to the aldolase class II family. MtnB subfamily. It depends on Zn(2+) as a cofactor.

It localises to the cytoplasm. It carries out the reaction 5-(methylsulfanyl)-D-ribulose 1-phosphate = 5-methylsulfanyl-2,3-dioxopentyl phosphate + H2O. Its pathway is amino-acid biosynthesis; L-methionine biosynthesis via salvage pathway; L-methionine from S-methyl-5-thio-alpha-D-ribose 1-phosphate: step 2/6. Functionally, catalyzes the dehydration of methylthioribulose-1-phosphate (MTRu-1-P) into 2,3-diketo-5-methylthiopentyl-1-phosphate (DK-MTP-1-P). The polypeptide is Methylthioribulose-1-phosphate dehydratase (Paracoccidioides brasiliensis (strain Pb18)).